Here is a 408-residue protein sequence, read N- to C-terminus: Glutaryl-CoA dehydrogenase, mitochondrial (408 aa).

Residues 1–13 constitute a mitochondrion transit peptide; sequence KGGKTQGRSAKSS. Substrate-binding positions include 107–108 and Ser-156; that span reads RS. FAD is bound by residues 147 to 156, Ser-156, and 182 to 184; these read FGLTEPNHGS and WIT. Lys-210 is subject to N6-acetyllysine. 257-264 contacts substrate; sequence FGCLNNAR. FAD-binding positions include Arg-289, Gln-300, and 357-361; that span reads DMLGG. Glu-384 functions as the Proton acceptor in the catalytic mechanism. Gly-385 provides a ligand contact to substrate. Residues Thr-386, 386-388, and Phe-404 each bind FAD; that span reads THD.

It belongs to the acyl-CoA dehydrogenase family. Homotetramer. It depends on FAD as a cofactor.

The protein localises to the mitochondrion matrix. It carries out the reaction glutaryl-CoA + oxidized [electron-transfer flavoprotein] + 2 H(+) = (2E)-butenoyl-CoA + reduced [electron-transfer flavoprotein] + CO2. Its pathway is amino-acid metabolism; lysine degradation. It participates in amino-acid metabolism; tryptophan metabolism. Functionally, catalyzes the oxidative decarboxylation of glutaryl-CoA to crotonyl-CoA and CO(2) in the degradative pathway of L-lysine, L-hydroxylysine, and L-tryptophan metabolism. It uses electron transfer flavoprotein as its electron acceptor. This Sus scrofa (Pig) protein is Glutaryl-CoA dehydrogenase, mitochondrial (GCDH).